The primary structure comprises 203 residues: Acireductone dioxygenase 3 (203 aa).

Fe(2+) contacts are provided by H96, H98, E102, and H141. Ni(2+) is bound by residues H96, H98, E102, and H141.

It belongs to the acireductone dioxygenase (ARD) family. Fe(2+) serves as cofactor. Requires Ni(2+) as cofactor.

It localises to the cytoplasm. The protein localises to the nucleus. It carries out the reaction 1,2-dihydroxy-5-(methylsulfanyl)pent-1-en-3-one + O2 = 4-methylsulfanyl-2-oxobutanoate + formate + 2 H(+). The enzyme catalyses 1,2-dihydroxy-5-(methylsulfanyl)pent-1-en-3-one + O2 = 3-(methylsulfanyl)propanoate + CO + formate + 2 H(+). The protein operates within amino-acid biosynthesis; L-methionine biosynthesis via salvage pathway; L-methionine from S-methyl-5-thio-alpha-D-ribose 1-phosphate: step 5/6. Functionally, catalyzes 2 different reactions between oxygen and the acireductone 1,2-dihydroxy-3-keto-5-methylthiopentene (DHK-MTPene) depending upon the metal bound in the active site. Fe-containing acireductone dioxygenase (Fe-ARD) produces formate and 2-keto-4-methylthiobutyrate (KMTB), the alpha-ketoacid precursor of methionine in the methionine recycle pathway. Ni-containing acireductone dioxygenase (Ni-ARD) produces methylthiopropionate, carbon monoxide and formate, and does not lie on the methionine recycle pathway. The polypeptide is Acireductone dioxygenase 3 (Physcomitrium patens (Spreading-leaved earth moss)).